The primary structure comprises 130 residues: Small ribosomal subunit protein bS16 (130 aa).

The segment at 80-130 (AGHTPKKERANMKKAQPGKKAVERAEEKAAKASAAAEAPAEAPAAEAAAEE) is disordered. Residues 99-109 (KAVERAEEKAA) show a composition bias toward basic and acidic residues. Low complexity predominate over residues 110 to 130 (KASAAAEAPAEAPAAEAAAEE).

This sequence belongs to the bacterial ribosomal protein bS16 family.

The polypeptide is Small ribosomal subunit protein bS16 (Jannaschia sp. (strain CCS1)).